The sequence spans 148 residues: Snaclec B1 (148 aa).

An N-terminal signal peptide occupies residues Met-1–Ala-24. 3 disulfide bridges follow: Cys-27/Cys-38, Cys-55/Cys-144, and Cys-121/Cys-136. The 112-residue stretch at Tyr-34–Lys-145 folds into the C-type lectin domain.

This sequence belongs to the snaclec family. Heterodimer; disulfide-linked. As to expression, expressed by the venom gland.

The protein localises to the secreted. In terms of biological role, interferes with one step of hemostasis (modulation of platelet aggregation, or coagulation cascade, for example). In Macrovipera lebetinus (Levantine viper), this protein is Snaclec B1.